The sequence spans 271 residues: Mitochondrial distribution and morphology protein 12 (271 aa).

Positions 1–267 (MSFDINWSTL…WPSWINLDFN (267 aa)) constitute an SMP-LTD domain. Lys49 is covalently cross-linked (Glycyl lysine isopeptide (Lys-Gly) (interchain with G-Cter in ubiquitin)).

Belongs to the MDM12 family. Component of the ER-mitochondria encounter structure (ERMES) or MDM complex, composed of MMM1, MDM10, MDM12 and MDM34. An MMM1 homodimer associates with one molecule of MDM12 on each side in a pairwise head-to-tail manner, and the SMP-LTD domains of MMM1 and MDM12 generate a continuous hydrophobic tunnel for phospholipid trafficking. Interacts with PUF3.

The protein localises to the mitochondrion outer membrane. Its subcellular location is the endoplasmic reticulum membrane. Component of the ERMES/MDM complex, which serves as a molecular tether to connect the endoplasmic reticulum (ER) and mitochondria. Components of this complex are involved in the control of mitochondrial shape and protein biogenesis, and function in nonvesicular lipid trafficking between the ER and mitochondria. MDM12 is required for the interaction of the ER-resident membrane protein MMM1 and the outer mitochondrial membrane-resident beta-barrel protein MDM10. The MDM12-MMM1 subcomplex functions in the major beta-barrel assembly pathway that is responsible for biogenesis of all mitochondrial outer membrane beta-barrel proteins, and acts in a late step after the SAM complex. The MDM10-MDM12-MMM1 subcomplex further acts in the TOM40-specific pathway after the action of the MDM12-MMM1 complex. Essential for establishing and maintaining the structure of mitochondria and maintenance of mtDNA nucleoids. The chain is Mitochondrial distribution and morphology protein 12 from Saccharomyces cerevisiae (strain AWRI1631) (Baker's yeast).